A 263-amino-acid chain; its full sequence is Protein MARD1 (263 aa).

The segment at Ser219–Thr263 adopts an FLZ-type zinc-finger fold.

This sequence belongs to the FLZ family. Interacts with KIN10 and KIN11 via its FLZ-type zinc finger domain. Interacts with KINB1 and KINB2 via its N-terminal part. Interacts with TZF4, TZF5 and TZF6. Interacts with MPK3 and MPK6.

It localises to the cytoplasm. The protein resides in the stress granule. Its subcellular location is the P-body. Functionally, may act as an adapter to facilitate the interaction of SnRK1 complex with effector proteins, conferring tissue- and stimulus-type specific differences in the SnRK1 regulation pathway. Involved in seed dormancy control. This chain is Protein MARD1, found in Arabidopsis thaliana (Mouse-ear cress).